The chain runs to 379 residues: Cytochrome b (379 aa).

Transmembrane regions (helical) follow at residues 33-53, 77-98, 113-133, and 178-198; these read FGSL…FLAM, WFLR…YLHI, WNVG…GYVL, and FFTF…IHLL. Heme b-binding residues include His-83 and His-97. His-182 and His-196 together coordinate heme b. His-201 contributes to the a ubiquinone binding site. Helical transmembrane passes span 226–246, 288–308, 320–340, and 347–367; these read YKDL…TLFS, LGGV…PITH, LTQI…WIGG, and FIII…VFAP.

This sequence belongs to the cytochrome b family. The cytochrome bc1 complex contains 3 respiratory subunits (MT-CYB, CYC1 and UQCRFS1), 2 core proteins (UQCRC1 and UQCRC2) and probably 6 low-molecular weight proteins. Heme b serves as cofactor.

The protein resides in the mitochondrion inner membrane. Its function is as follows. Component of the ubiquinol-cytochrome c reductase complex (complex III or cytochrome b-c1 complex) that is part of the mitochondrial respiratory chain. The b-c1 complex mediates electron transfer from ubiquinol to cytochrome c. Contributes to the generation of a proton gradient across the mitochondrial membrane that is then used for ATP synthesis. In Amia calva (Bowfin), this protein is Cytochrome b (mt-cyb).